Reading from the N-terminus, the 290-residue chain is uncharacterized protein (290 aa).

The next 7 helical transmembrane spans lie at 40–60 (MHVI…SPVI), 80–100 (DAHV…YTCL), 110–130 (LFGY…YFVW), 139–159 (VHIT…VITF), 166–188 (MYYG…HYFL), 200–220 (MING…WGWF), and 238–260 (WALS…FWVS). The TLC domain maps to 74 to 271 (KTRLNWDAHV…MIDAIRRRAH (198 aa)).

It is found in the endoplasmic reticulum membrane. This is an uncharacterized protein from Schizosaccharomyces pombe (strain 972 / ATCC 24843) (Fission yeast).